A 509-amino-acid polypeptide reads, in one-letter code: Lysine--tRNA ligase (509 aa).

The Mg(2+) site is built by Glu418 and Glu425.

It belongs to the class-II aminoacyl-tRNA synthetase family. As to quaternary structure, homodimer. The cofactor is Mg(2+).

The protein localises to the cytoplasm. The catalysed reaction is tRNA(Lys) + L-lysine + ATP = L-lysyl-tRNA(Lys) + AMP + diphosphate. The chain is Lysine--tRNA ligase (lysS) from Acinetobacter baylyi (strain ATCC 33305 / BD413 / ADP1).